Reading from the N-terminus, the 177-residue chain is Preprotein translocase subunit SECE1 (177 aa).

A chloroplast-targeting transit peptide spans 1 to 38 (MSLTAQFSPPVTGITRSLRDTKPSLSNLRVFPVYTEIR). A disordered region spans residues 60–87 (RDTAGSESESEATPSPAEESGSGEDKEV). The span at 64–79 (GSESESEATPSPAEES) shows a compositional bias: low complexity. A helical transmembrane segment spans residues 140 to 160 (VVLGVIAGSSVVLLTVNFLLA).

This sequence belongs to the SecE/SEC61-gamma family. Part of the Sec protein translocation apparatus. Interacts with SCY1 and ALB3.

The protein localises to the plastid. Its subcellular location is the chloroplast thylakoid membrane. In terms of biological role, involved in the import/insertion pathway in the thylakoids. The signal recognition particle is not involved in the insertion of SECE1 in the thylakoid membrane. This chain is Preprotein translocase subunit SECE1 (SECE1), found in Arabidopsis thaliana (Mouse-ear cress).